A 77-amino-acid chain; its full sequence is Small ribosomal subunit protein bS20 (77 aa).

It belongs to the bacterial ribosomal protein bS20 family.

Binds directly to 16S ribosomal RNA. The sequence is that of Small ribosomal subunit protein bS20 from Lactococcus lactis subsp. lactis (strain IL1403) (Streptococcus lactis).